Here is a 72-residue protein sequence, read N- to C-terminus: Large ribosomal subunit protein bL31 (72 aa).

Positions 16, 18, 37, and 40 each coordinate Zn(2+).

Belongs to the bacterial ribosomal protein bL31 family. Type A subfamily. In terms of assembly, part of the 50S ribosomal subunit. The cofactor is Zn(2+).

Functionally, binds the 23S rRNA. The chain is Large ribosomal subunit protein bL31 from Buchnera aphidicola subsp. Acyrthosiphon pisum (strain APS) (Acyrthosiphon pisum symbiotic bacterium).